Reading from the N-terminus, the 842-residue chain is Cation/H(+) antiporter 20 (842 aa).

A run of 12 helical transmembrane segments spans residues 26–46, 55–75, 86–106, 122–142, 155–175, 193–213, 228–248, 283–303, 320–340, 353–373, 380–400, and 413–433; these read FPLL…LAVL, VIAE…RNMA, MPIL…LVGL, GIAV…AFVI, YAEF…PVLA, MAAA…AVAL, LVSL…LVVI, FATD…GLTI, FVSG…TDVA, LVVV…AVMV, ALTL…VLNI, and AILV…VMAI. Residues 585 to 595 show a composition bias toward basic and acidic residues; sequence DHGHSHHHQDG. Residues 585–605 form a disordered region; that stretch reads DHGHSHHHQDGGGDGNVPENV.

It belongs to the monovalent cation:proton antiporter 2 (CPA2) transporter (TC 2.A.37) family. CHX (TC 2.A.37.4) subfamily. As to expression, expressed in leaves and stems. Preferentially expressed in guards cells.

It is found in the endomembrane system. Its function is as follows. Operates as a K(+)/H(+) antiporter that maintains K(+) homeostasis in guard cells and could regulate pH. Plays a critical role in osmoregulation through the control of stomates opening. The sequence is that of Cation/H(+) antiporter 20 (CHX20) from Arabidopsis thaliana (Mouse-ear cress).